The primary structure comprises 887 residues: Kinesin-like protein KIF20A (887 aa).

Serine 2 carries the post-translational modification N-acetylserine. 3 positions are modified to phosphoserine: serine 7, serine 14, and serine 21. The region spanning lysine 63 to leucine 506 is the Kinesin motor domain. Glycine 159–threonine 166 provides a ligand contact to ATP. Serine 527 carries the post-translational modification Phosphoserine; by PLK1. The segment at serine 527 to aspartate 553 is disordered. Over residues aspartate 543–aspartate 553 the composition is skewed to acidic residues. Positions lysine 559–lysine 804 form a coiled coil. A phosphoserine mark is found at serine 683 and serine 823. A globular region spans residues alanine 805–tyrosine 887. The interval lysine 826–histidine 875 is disordered. Phosphothreonine is present on threonine 855. The segment covering proline 856–serine 865 has biased composition (polar residues). Phosphoserine is present on residues serine 865, serine 876, and serine 881.

This sequence belongs to the TRAFAC class myosin-kinesin ATPase superfamily. Kinesin family. Phosphorylated by PLK1 at Ser-527 during mitosis, creating a docking site for PLK1 and recruiting PLK1 at central spindle. As to expression, ubiquitously expressed, with highest levels in spleen and testis.

Its subcellular location is the golgi apparatus. It localises to the cytoplasm. It is found in the cytoskeleton. The protein resides in the spindle. Functionally, mitotic kinesin required for chromosome passenger complex (CPC)-mediated cytokinesis. Following phosphorylation by PLK1, involved in recruitment of PLK1 to the central spindle. Interacts with guanosine triphosphate (GTP)-bound forms of RAB6A and RAB6B. May act as a motor required for the retrograde RAB6 regulated transport of Golgi membranes and associated vesicles along microtubules. Has a microtubule plus end-directed motility. In Mus musculus (Mouse), this protein is Kinesin-like protein KIF20A (Kif20a).